The primary structure comprises 148 residues: NPC intracellular cholesterol transporter 2 homolog a (148 aa).

Positions 1 to 16 (MLRYAVIACAALVVFA) are cleaved as a signal peptide. Cystine bridges form between Cys24–Cys140, Cys39–Cys46, and Cys92–Cys99. A glycan (N-linked (GlcNAc...) asparagine) is linked at Asn51.

It belongs to the NPC2 family. Broadly expressed with a higher level of expression in many tissues, including midgut, salivary gland and ventral nerve cord.

It is found in the secreted. In terms of biological role, functions redundantly with Npc2b in regulating sterol homeostasis and ecdysteroid biosynthesis, probably by controlling the availability of sterol substrate. In Drosophila melanogaster (Fruit fly), this protein is NPC intracellular cholesterol transporter 2 homolog a.